A 221-amino-acid polypeptide reads, in one-letter code: Ribonuclease T (221 aa).

The Exonuclease domain occupies 20 to 194; sequence VVIDVETAGF…YDTERTAELF (175 aa). Mg(2+) contacts are provided by Asp23, Glu25, His181, and Asp186. His181 (proton donor/acceptor) is an active-site residue.

The protein belongs to the RNase T family. As to quaternary structure, homodimer. Mg(2+) is required as a cofactor.

In terms of biological role, trims short 3' overhangs of a variety of RNA species, leaving a one or two nucleotide 3' overhang. Responsible for the end-turnover of tRNA: specifically removes the terminal AMP residue from uncharged tRNA (tRNA-C-C-A). Also appears to be involved in tRNA biosynthesis. The polypeptide is Ribonuclease T (Shewanella frigidimarina (strain NCIMB 400)).